Here is a 228-residue protein sequence, read N- to C-terminus: Phosphatidylserine decarboxylase proenzyme (228 aa).

Catalysis depends on S197, which acts as the Schiff-base intermediate with substrate; via pyruvic acid. S197 bears the Pyruvic acid (Ser); by autocatalysis mark.

It belongs to the phosphatidylserine decarboxylase family. PSD-A subfamily. In terms of assembly, heterodimer of a large membrane-associated beta subunit and a small pyruvoyl-containing alpha subunit. Requires pyruvate as cofactor. In terms of processing, is synthesized initially as an inactive proenzyme. Formation of the active enzyme involves a self-maturation process in which the active site pyruvoyl group is generated from an internal serine residue via an autocatalytic post-translational modification. Two non-identical subunits are generated from the proenzyme in this reaction, and the pyruvate is formed at the N-terminus of the alpha chain, which is derived from the carboxyl end of the proenzyme. The post-translation cleavage follows an unusual pathway, termed non-hydrolytic serinolysis, in which the side chain hydroxyl group of the serine supplies its oxygen atom to form the C-terminus of the beta chain, while the remainder of the serine residue undergoes an oxidative deamination to produce ammonia and the pyruvoyl prosthetic group on the alpha chain.

It localises to the cell membrane. The catalysed reaction is a 1,2-diacyl-sn-glycero-3-phospho-L-serine + H(+) = a 1,2-diacyl-sn-glycero-3-phosphoethanolamine + CO2. Its pathway is phospholipid metabolism; phosphatidylethanolamine biosynthesis; phosphatidylethanolamine from CDP-diacylglycerol: step 2/2. Catalyzes the formation of phosphatidylethanolamine (PtdEtn) from phosphatidylserine (PtdSer). This Bacteroides thetaiotaomicron (strain ATCC 29148 / DSM 2079 / JCM 5827 / CCUG 10774 / NCTC 10582 / VPI-5482 / E50) protein is Phosphatidylserine decarboxylase proenzyme.